A 1026-amino-acid polypeptide reads, in one-letter code: MNMTEKIQTYLNDPKIVSVNTVDAHSDHKYFESLEEFSEGEMKLRQSLNGKWKIHYAQNTNQVLKDFYKTEFDETDLNFINVPGHLELQGFGSPQYVNTQYPWDGKEFLRPPQVPQESNAVASYVKHFTLNDALKDKKVFISFQGVATSIFVWVNGNFVGYSEDSFTPSEFEISDYLVEGDNKLAVAVYRYSTASWLEDQDFWRLYGIFRDVYLYAIPKVHVQDLFVKGDYDYQTKAGQLDIDLKTVGDYEDKKIKYVLSDYEGIVTEGDASVNGDGELSVSLENLKIKPWSAESPKLYDLILHVLDDDQVVEVVPVKVGFRRFEIKDKLMLLNGKRIVFKGVNRHEFNARTGRCITEEDMLWDIKVMKQHNINAVRTSHYPNQTRWYELCDEYGLYVIDEANLETHGTWQKLGLCEPSWNIPASEPEWLPACLDRANNMFQRDKNHASVIIWSCGNESYAGKDIADMADYFRSVDNTRPVHYEGVAWCREFDYITDIESRMYAKPADIEEYLTTGKLVDLSSVSDKHFASGNLTNKPQKPYISCEYMHTMGNSGGGLQLYTDLEKYPEYQGGFIWDFIDQAIYKTLPNGSEFLSYGGDWHDRPSDYEFCGNGIVFADRTLTPKLQTVKHLYSNIKIAVDEKSVTIKNDNLFEDLSAYTFLARVYEDGRKVSESEYHFDVKPGEEATFPVNFVVEASNSEQIYEVACVLREATEWAPKGHEIVRGQYVVEKISTETPVKAPLNVVEGDFNIGIQGQNFSILLSRAQNTLVSAKYNGVEFIEKGPKLSFTRAYTDNDRGAGYPFEMAGWKVAGNYSKVTDTQIQIEDDSVKVTYVHELPGLSDVEVKVTYQVDYKGRIFVTANYDGKAGLPNFPEFGLEFAIGSQFTNLSYYGYGAEESYRDKLPGAYLGRYETSVEKTFAPYLMPQESGNHYGTREFTVSDDNHNGLKFTALNKAFEFSALRNSTEQIENARHQYELQESDATWIKVLAAQMGVGGDDTWGAPVHDEFLLSSADSYQLSFMIEPLN.

The active-site Proton donor is the glutamate 458. The active-site Nucleophile is the glutamate 546.

This sequence belongs to the glycosyl hydrolase 2 family.

The catalysed reaction is Hydrolysis of terminal non-reducing beta-D-galactose residues in beta-D-galactosides.. The protein is Beta-galactosidase (lacZ) of Streptococcus thermophilus.